Here is a 334-residue protein sequence, read N- to C-terminus: DNA-directed RNA polymerase subunit alpha (334 aa).

Positions 1-233 are alpha N-terminal domain (alpha-NTD); the sequence is MADQTISNVL…NLFTPLVSQE (233 aa). The segment at 263 to 334 is alpha C-terminal domain (alpha-CTD); sequence DNENSYNLYN…QLKKRFKIQL (72 aa).

This sequence belongs to the RNA polymerase alpha chain family. In plastids the minimal PEP RNA polymerase catalytic core is composed of four subunits: alpha, beta, beta', and beta''. When a (nuclear-encoded) sigma factor is associated with the core the holoenzyme is formed, which can initiate transcription.

The protein localises to the plastid. It is found in the chloroplast. The enzyme catalyses RNA(n) + a ribonucleoside 5'-triphosphate = RNA(n+1) + diphosphate. DNA-dependent RNA polymerase catalyzes the transcription of DNA into RNA using the four ribonucleoside triphosphates as substrates. The protein is DNA-directed RNA polymerase subunit alpha of Chaetosphaeridium globosum (Charophycean green alga).